A 235-amino-acid polypeptide reads, in one-letter code: Large ribosomal subunit protein uL1 (235 aa).

Belongs to the universal ribosomal protein uL1 family. Part of the 50S ribosomal subunit.

Functionally, binds directly to 23S rRNA. The L1 stalk is quite mobile in the ribosome, and is involved in E site tRNA release. Protein L1 is also a translational repressor protein, it controls the translation of the L11 operon by binding to its mRNA. This is Large ribosomal subunit protein uL1 from Citrobacter koseri (strain ATCC BAA-895 / CDC 4225-83 / SGSC4696).